The primary structure comprises 202 residues: MDYFPVIFSLLFVTFQGAPETAVLGAELSTGAENGVQSPPPSTPWRPRRSKRCSCSSLMDKECVYFCHLDIIWVNTPERVVPYGLGGSSRSKRSLKDLLPNKATDQAVRCQCAHQKDKKCWNFCQAGKELRAQSTMQKSLKDSKKGKPCSKLGKKCIYQQLVEGRKLRRLEAISNSIKASFRVAKLKAELYRDQKLTHNRAH.

Positions 1-25 are cleaved as a signal peptide; that stretch reads MDYFPVIFSLLFVTFQGAPETAVLG. Positions 26 to 50 are excised as a propeptide; that stretch reads AELSTGAENGVQSPPPSTPWRPRRS. Intrachain disulfides connect Cys-53–Cys-67 and Cys-55–Cys-63. A propeptide spanning residues 74 to 202 is cleaved from the precursor; sequence VNTPERVVPY…DQKLTHNRAH (129 aa). An endothelin-like region spans residues 110-124; that stretch reads CQCAHQKDKKCWNFC.

This sequence belongs to the endothelin/sarafotoxin family. As to expression, highest expression in the adult is in lung. Lower levels found in heart, kidney, brain and intestine. In the embryo, expressed in outer and inner pharyngeal arch surfaces. Also expressed in endothelium of dorsal aorta and arch arteries, and in epithelium of pharyngeal pouches.

It is found in the secreted. Endothelins are endothelium-derived vasoconstrictor peptides. Probable ligand for G-protein coupled receptors EDNRA and EDNRB which activates PTK2B, BCAR1, BCAR3 and, GTPases RAP1 and RHOA cascade in glomerular mesangial cells. Also binds the DEAR/FBXW7-AS1 receptor. Promotes mesenteric arterial wall remodeling via activation of ROCK signaling and subsequent colocalization of NFATC3 with F-actin filaments. NFATC3 then translocates to the nucleus where it subsequently promotes the transcription of the smooth muscle hypertrophy and differentiation marker ACTA2. In Mus musculus (Mouse), this protein is Endothelin-1 (Edn1).